The primary structure comprises 562 residues: NAD-dependent malic enzyme (562 aa).

The active-site Proton donor is tyrosine 101. Arginine 154 is a binding site for NAD(+). Lysine 172 serves as the catalytic Proton acceptor. Positions 243, 244, and 267 each coordinate a divalent metal cation. Aspartate 267 and asparagine 415 together coordinate NAD(+).

It belongs to the malic enzymes family. In terms of assembly, homotetramer. Mg(2+) serves as cofactor. Requires Mn(2+) as cofactor.

It catalyses the reaction (S)-malate + NAD(+) = pyruvate + CO2 + NADH. The catalysed reaction is oxaloacetate + H(+) = pyruvate + CO2. The chain is NAD-dependent malic enzyme from Shewanella pealeana (strain ATCC 700345 / ANG-SQ1).